Here is a 1010-residue protein sequence, read N- to C-terminus: Contactin-1 (1010 aa).

The N-terminal stretch at 1–19 (MRFFISHLVTLCFIFCVAD) is a signal peptide. 6 Ig-like C2-type domains span residues 33 to 123 (PVFE…ATLS), 132 to 215 (PEEH…KSVF), 232 to 317 (PADI…ARVY), 322 to 398 (PEWV…AELK), 404 to 491 (PTFE…GVLE), and 496 to 592 (TRIT…LVVR). 2 cysteine pairs are disulfide-bonded: Cys57/Cys106 and Cys150/Cys203. Residues Asn200 and Asn249 are each glycosylated (N-linked (GlcNAc...) asparagine). A disulfide bond links Cys254 and Cys301. N-linked (GlcNAc...) asparagine glycosylation occurs at Asn329. Disulfide bonds link Cys343–Cys382 and Cys427–Cys475. N-linked (GlcNAc...) asparagine glycans are attached at residues Asn448, Asn464, Asn485, and Asn512. Cysteines 517 and 574 form a disulfide. Residue Asn582 is glycosylated (N-linked (GlcNAc...) asparagine). Fibronectin type-III domains follow at residues 597–695 (PPGG…TEGA), 700–797 (APSD…SAQD), 802–897 (VPTD…APPS), and 899–990 (RPRI…TAGV). The segment covering 679-689 (GTGEPSMPSQR) has biased composition (polar residues). Residues 679–708 (GTGEPSMPSQRIRTEGAPPNVAPSDVGGGG) form a disordered region. Asn924 is a glycosylation site (N-linked (GlcNAc...) asparagine). A lipid anchor (GPI-anchor amidated serine) is attached at Ser984. The propeptide at 985–1010 (GATAGVPTLLLGLVLPALGVLAYSGF) is removed in mature form.

Belongs to the immunoglobulin superfamily. Contactin family. In terms of assembly, interacts with TNR.

It localises to the cell membrane. Its function is as follows. Mediates cell surface interactions during nervous system development. Interaction with TNR enhances the neurite outgrowth. This is Contactin-1 (CNTN1) from Gallus gallus (Chicken).